A 228-amino-acid chain; its full sequence is Triosephosphate isomerase (228 aa).

Residue 11–13 participates in substrate binding; the sequence is NFK. The active-site Electrophile is His-95. The active-site Proton acceptor is the Glu-143. Substrate-binding positions include Ile-148, Gly-183, and 204 to 205; that span reads AS.

It belongs to the triosephosphate isomerase family. In terms of assembly, homotetramer; dimer of dimers.

The protein resides in the cytoplasm. It catalyses the reaction D-glyceraldehyde 3-phosphate = dihydroxyacetone phosphate. Its pathway is carbohydrate biosynthesis; gluconeogenesis. It participates in carbohydrate degradation; glycolysis; D-glyceraldehyde 3-phosphate from glycerone phosphate: step 1/1. Functionally, involved in the gluconeogenesis. Catalyzes stereospecifically the conversion of dihydroxyacetone phosphate (DHAP) to D-glyceraldehyde-3-phosphate (G3P). The polypeptide is Triosephosphate isomerase (Pyrococcus horikoshii (strain ATCC 700860 / DSM 12428 / JCM 9974 / NBRC 100139 / OT-3)).